The following is a 296-amino-acid chain: NADH-ubiquinone oxidoreductase chain 2 (296 aa).

The next 8 membrane-spanning stretches (helical) occupy residues 5–25, 49–69, 71–91, 114–134, 167–187, 209–229, 242–262, and 276–296; these read LCLF…GLWL, YFLI…NQSF, FLIP…MWLV, LLGL…SAFI, FFLM…AVIL, ASIS…GFFI, LLVL…FSIA, and KMEI…LFFL.

The protein belongs to the complex I subunit 2 family.

Its subcellular location is the mitochondrion inner membrane. The catalysed reaction is a ubiquinone + NADH + 5 H(+)(in) = a ubiquinol + NAD(+) + 4 H(+)(out). In terms of biological role, core subunit of the mitochondrial membrane respiratory chain NADH dehydrogenase (Complex I) that is believed to belong to the minimal assembly required for catalysis. Complex I functions in the transfer of electrons from NADH to the respiratory chain. The immediate electron acceptor for the enzyme is believed to be ubiquinone. The chain is NADH-ubiquinone oxidoreductase chain 2 (ND2) from Artemia franciscana (Brine shrimp).